Consider the following 474-residue polypeptide: Putative pectinesterase/pectinesterase inhibitor 38 (474 aa).

The tract at residues 1-130 (MVFGNEMCDE…HSLESITIDV (130 aa)) is pectinesterase inhibitor 38. N80 is a glycosylation site (N-linked (GlcNAc...) asparagine). A pectinesterase 38 region spans residues 164 to 461 (DVVVAQDGSG…TLPKFIDSAS (298 aa)). Positions 241 and 271 each coordinate substrate. The active-site Proton donor; for pectinesterase activity is the D294. An intrachain disulfide couples C308 to C328. Catalysis depends on D315, which acts as the Nucleophile; for pectinesterase activity. N351 carries an N-linked (GlcNAc...) asparagine glycan. Substrate is bound by residues R380 and W382. N409 carries N-linked (GlcNAc...) asparagine glycosylation.

The protein in the N-terminal section; belongs to the PMEI family. It in the C-terminal section; belongs to the pectinesterase family.

It localises to the secreted. The protein resides in the cell wall. It carries out the reaction [(1-&gt;4)-alpha-D-galacturonosyl methyl ester](n) + n H2O = [(1-&gt;4)-alpha-D-galacturonosyl](n) + n methanol + n H(+). It participates in glycan metabolism; pectin degradation; 2-dehydro-3-deoxy-D-gluconate from pectin: step 1/5. In terms of biological role, acts in the modification of cell walls via demethylesterification of cell wall pectin. This is Putative pectinesterase/pectinesterase inhibitor 38 (PME38) from Arabidopsis thaliana (Mouse-ear cress).